A 546-amino-acid chain; its full sequence is Chaperonin GroEL (546 aa).

ATP-binding positions include 30 to 33 (TLGP), Lys51, 87 to 91 (DGTTT), Gly415, 479 to 481 (NAA), and Asp495. A disordered region spans residues 526–546 (KEDAPMPGGMPGGMGGMGMDM). Over residues 534-546 (GMPGGMGGMGMDM) the composition is skewed to gly residues.

It belongs to the chaperonin (HSP60) family. Forms a cylinder of 14 subunits composed of two heptameric rings stacked back-to-back. Interacts with the co-chaperonin GroES.

The protein resides in the cytoplasm. It carries out the reaction ATP + H2O + a folded polypeptide = ADP + phosphate + an unfolded polypeptide.. In terms of biological role, together with its co-chaperonin GroES, plays an essential role in assisting protein folding. The GroEL-GroES system forms a nano-cage that allows encapsulation of the non-native substrate proteins and provides a physical environment optimized to promote and accelerate protein folding. This is Chaperonin GroEL from Burkholderia cepacia (Pseudomonas cepacia).